The chain runs to 602 residues: Elongation factor 4 (602 aa).

Residues K8–S189 enclose the tr-type G domain. GTP is bound by residues D20 to T25 and N136 to D139.

It belongs to the TRAFAC class translation factor GTPase superfamily. Classic translation factor GTPase family. LepA subfamily.

It is found in the cell inner membrane. The catalysed reaction is GTP + H2O = GDP + phosphate + H(+). Its function is as follows. Required for accurate and efficient protein synthesis under certain stress conditions. May act as a fidelity factor of the translation reaction, by catalyzing a one-codon backward translocation of tRNAs on improperly translocated ribosomes. Back-translocation proceeds from a post-translocation (POST) complex to a pre-translocation (PRE) complex, thus giving elongation factor G a second chance to translocate the tRNAs correctly. Binds to ribosomes in a GTP-dependent manner. This is Elongation factor 4 from Helicobacter pylori (strain G27).